The following is a 771-amino-acid chain: MDVVKKFAVMSVTVVAGPVLTLSSPVVVTFGTSLIAVSLVKRLLQEQPRVIAHDHEHYPGGSESSSSSCATAPILRNLSRDQCDSENIGCSSSACSPSEIVKVTRQVVEVERGLYRDKQQFGMDVVKKFAVMSVTVVAGPVLTLSSPVVVTFGTSLIAVSLVKRLLQEQPRVIAHDHEHYPGGSESSSSSCATAPILRNLSRDQCDSENIGCSSSACSPSEIVKVTRQVVEVERGLYRDIFQDNEIPSVMEEKLQKLLYSEGEKIRRRCQFEASTMHSRKVKVPEVGTIPDIQTWFDATFPGNSVRFSDFDGYTVATEDINMDVQDCRLKFGKTFRPYEFKESLKPVLRTAMPEKRQGSLIESVLAFRKRNLAAPRLQGALNEWHTIENVLKKALKVFFFEDLIDRTDHCTYESALRWWDKQSVTARAQLVADQRRLCDVDFTTYNFMIKNDVKPKLDLTPQVEYAALQTVVYPDKIVNAFFGPIIKEINERIIRALRPHVVFNSRMTADELNETVAFLTPHKYRALEIDFSKFDKSKTGLHIKAVIGLYKLFGLDGLLKVLWEKSQYQTYVKDRNFGLEAYLLYQQKSGNCDTYGSNTWSAALALLDCLPLEDAHFCVFGGDDSLILFDQGYIISDPCRQLAGTWNLECKVFDFKYPAFCGKFLLCIDGKYQFVPDAAKFITKLGRTDVRDVEVLSEIYISINDNYKSYKDFKVLDALDKALVDRYRSPYSAISALVSLCYHIFDFNKFKLLFNCEGKFVDKKLRKDFEW.

The RdRp catalytic domain maps to 524–637 (YRALEIDFSK…LFDQGYIISD (114 aa)).

This sequence belongs to the ssRNA positive-strand viruses RNA-directed RNA polymerase family.

The protein localises to the host chloroplast envelope. It catalyses the reaction RNA(n) + a ribonucleoside 5'-triphosphate = RNA(n+1) + diphosphate. Its function is as follows. RNA-directed RNA polymerase plays an essential role in the virus replication. The polypeptide is RNA-directed RNA polymerase (Hordeum vulgare (Barley)).